An 859-amino-acid chain; its full sequence is Heat shock protein 105 kDa (859 aa).

N-acetylserine is present on Ser2. Lys471 is subject to N6-acetyllysine. A phosphoserine mark is found at Ser509 and Ser510. Disordered regions lie at residues 515–585 (MDCQ…PPEA) and 797–859 (CEPV…MDLD). The span at 533–555 (QQDNNEAGTQPQVQTDGHQTSQS) shows a compositional bias: polar residues. The residue at position 558 (Ser558) is a Phosphoserine. Thr562 carries the phosphothreonine modification. Composition is skewed to basic and acidic residues over residues 564–585 (EENK…PPEA) and 806–815 (PKIESPKLER). Phosphoserine is present on Ser810. Thr816 carries the post-translational modification Phosphothreonine. Positions 822-831 (TDKKEEDLDG) are enriched in basic and acidic residues. Residues 850–859 (EKSSINMDLD) show a composition bias toward polar residues.

The protein belongs to the heat shock protein 70 family. As to quaternary structure, interacts with HSPA8/HSC70. Interacts with HSPA1A (via NBD) and HSPA1B (via NBD). In terms of processing, phosphorylation on Ser-509 may be important for regulation of the HSPA8/HSC70 chaperone activity.

It is found in the cytoplasm. Its function is as follows. Acts as a nucleotide-exchange factor (NEF) for chaperone proteins HSPA1A and HSPA1B, promoting the release of ADP from HSPA1A/B thereby triggering substrate release. Prevents the aggregation of denatured proteins in cells under severe stress, on which the ATP levels decrease markedly. Inhibits HSPA8/HSC70 ATPase and chaperone activities. This Bos taurus (Bovine) protein is Heat shock protein 105 kDa (HSPH1).